Consider the following 357-residue polypeptide: MKASVYDFTLKELSQLLKPSFRAKQLYLWLYAKYKTSFKDMQNNFSKDFIAYLEREFTLRTIEIAHVRKSIDGSKKYLFKSLRDNHTFEAVLLKMKDKKIDEETNAILEGEKYTVCVSCQIGCQVGCTFCFTQKGGFVRNLKASEIIQQALLIKEDNNLPIEKALNIVFMGMGEPLNNLDEVCKAIEIFNTGMQISPKRITISTSGVADKIPILAGKNLGVQLAISLHAVDDKTRSSLMPLNKKYNIECVLNEVRKWPLEQRKRVMFEYLLIKDLNDSLDCAKKLLKLLNGIKSKVNLILFNPHEGSKFERPSLESARMFADFLNSKGLLCTIRESKALDIEAACGQLREKKLSQQI.

The active-site Proton acceptor is Glu89. The 232-residue stretch at 109-340 (EGEKYTVCVS…CTIRESKALD (232 aa)) folds into the Radical SAM core domain. A disulfide bridge connects residues Cys116 and Cys345. Positions 123, 127, and 130 each coordinate [4Fe-4S] cluster. Residues 173-174 (GE), Ser203, 226-228 (SLH), and Asn302 each bind S-adenosyl-L-methionine. Cys345 acts as the S-methylcysteine intermediate in catalysis.

The protein belongs to the radical SAM superfamily. RlmN family. [4Fe-4S] cluster is required as a cofactor.

It is found in the cytoplasm. It carries out the reaction adenosine(2503) in 23S rRNA + 2 reduced [2Fe-2S]-[ferredoxin] + 2 S-adenosyl-L-methionine = 2-methyladenosine(2503) in 23S rRNA + 5'-deoxyadenosine + L-methionine + 2 oxidized [2Fe-2S]-[ferredoxin] + S-adenosyl-L-homocysteine. The catalysed reaction is adenosine(37) in tRNA + 2 reduced [2Fe-2S]-[ferredoxin] + 2 S-adenosyl-L-methionine = 2-methyladenosine(37) in tRNA + 5'-deoxyadenosine + L-methionine + 2 oxidized [2Fe-2S]-[ferredoxin] + S-adenosyl-L-homocysteine. Specifically methylates position 2 of adenine 2503 in 23S rRNA and position 2 of adenine 37 in tRNAs. m2A2503 modification seems to play a crucial role in the proofreading step occurring at the peptidyl transferase center and thus would serve to optimize ribosomal fidelity. In Helicobacter pylori (strain G27), this protein is Dual-specificity RNA methyltransferase RlmN.